A 204-amino-acid chain; its full sequence is Proteasome subunit beta type-2-A (204 aa).

Methionine 1 carries the post-translational modification N-acetylmethionine.

This sequence belongs to the peptidase T1B family. In terms of assembly, component of the 20S core complex of the 26S proteasome. The 26S proteasome is composed of a core protease (CP), known as the 20S proteasome, capped at one or both ends by the 19S regulatory particle (RP/PA700). The 20S proteasome core is composed of 28 subunits that are arranged in four stacked rings, resulting in a barrel-shaped structure. The two end rings are each formed by seven alpha subunits, and the two central rings are each formed by seven beta subunits. The catalytic chamber with the active sites is on the inside of the barrel.

The protein resides in the cytoplasm. The protein localises to the nucleus. Its function is as follows. Non-catalytic component of the proteasome, a multicatalytic proteinase complex which is characterized by its ability to cleave peptides with Arg, Phe, Tyr, Leu, and Glu adjacent to the leaving group at neutral or slightly basic pH. The proteasome has an ATP-dependent proteolytic activity. This Arabidopsis thaliana (Mouse-ear cress) protein is Proteasome subunit beta type-2-A (PBD1).